A 514-amino-acid chain; its full sequence is Cytochrome P450 monooxygenase verB (514 aa).

Residues 5-25 (WLSASVLITAVILLVDYLNYY) form a helical membrane-spanning segment. Residue cysteine 457 coordinates heme.

This sequence belongs to the cytochrome P450 family. Heme is required as a cofactor.

It localises to the membrane. Its pathway is mycotoxin biosynthesis. Cytochrome P450 monooxygenase; part of the gene cluster that mediates the biosynthesis of 11'-deoxyverticillin A, one of the dimeric epipolythiodioxopiperazines (ETPs) from the verticillin family that act as mycotoxins. 11'-deoxyverticillin A is required for normal conidiation. The nonribosomal peptide synthetase verP is speculated to be responsible for condensation of amino acids to form the carbon skeleton of verticillin, whereas the cluster-specific tailoring enzymes are involved in further modifications leading to the production of 11'-deoxyverticillin A. The sequence is that of Cytochrome P450 monooxygenase verB from Clonostachys rogersoniana.